A 416-amino-acid polypeptide reads, in one-letter code: Phosphoglycerate kinase (416 aa).

Positions 23, 24, 25, 26, 38, 39, 62, 63, 65, 66, 121, 122, 168, and 169 each coordinate (2R)-3-phosphoglycerate. Glycine 212 serves as a coordination point for ADP. Glycine 212 provides a ligand contact to CDP. Residues alanine 213 and lysine 214 each coordinate AMP. Residue alanine 213 coordinates ATP. Alanine 213 provides a ligand contact to Mg(2+). Mg(2+) contacts are provided by alanine 216 and aspartate 217. CDP is bound at residue aspartate 217. Lysine 218 is a binding site for AMP. ATP is bound at residue lysine 218. Glycine 236 lines the ADP pocket. Glycine 236 is a CDP binding site. The AMP site is built by glycine 237 and glycine 311. ATP-binding residues include glycine 237 and glycine 311. CDP is bound by residues glycine 336 and phenylalanine 341. Phenylalanine 341 contributes to the ADP binding site. Residue glutamate 342 participates in AMP binding. Residues glutamate 342, aspartate 373, and threonine 374 each coordinate ATP. Position 373 (aspartate 373) interacts with Mg(2+).

Belongs to the phosphoglycerate kinase family. Monomer. Requires Mg(2+) as cofactor.

Its subcellular location is the cytoplasm. The protein resides in the mitochondrion. It catalyses the reaction (2R)-3-phosphoglycerate + ATP = (2R)-3-phospho-glyceroyl phosphate + ADP. Its pathway is carbohydrate degradation; glycolysis; pyruvate from D-glyceraldehyde 3-phosphate: step 2/5. Its function is as follows. Catalyzes one of the two ATP producing reactions in the glycolytic pathway via the reversible conversion of 1,3-diphosphoglycerate to 3-phosphoglycerate. Both L- and D- forms of purine and pyrimidine nucleotides can be used as substrates, but the activity is much lower on pyrimidines. Negatively regulates the biosynthesis of acetyl-CoA from pyruvate in the mitochondrion. The sequence is that of Phosphoglycerate kinase (PGK) from Kluyveromyces lactis (strain ATCC 8585 / CBS 2359 / DSM 70799 / NBRC 1267 / NRRL Y-1140 / WM37) (Yeast).